A 593-amino-acid chain; its full sequence is UvrABC system protein C (593 aa).

Residues Met-17–Ile-94 enclose the GIY-YIG domain. Residues Lys-199–Leu-234 form the UVR domain.

It belongs to the UvrC family. Interacts with UvrB in an incision complex.

The protein localises to the cytoplasm. Functionally, the UvrABC repair system catalyzes the recognition and processing of DNA lesions. UvrC both incises the 5' and 3' sides of the lesion. The N-terminal half is responsible for the 3' incision and the C-terminal half is responsible for the 5' incision. This chain is UvrABC system protein C, found in Staphylococcus aureus (strain MRSA252).